The following is a 479-amino-acid chain: Ribulose bisphosphate carboxylase large chain (479 aa).

Positions 1–2 (MS) are excised as a propeptide. Residues Asn-123 and Thr-173 each contribute to the substrate site. Lys-175 serves as the catalytic Proton acceptor. Lys-177 provides a ligand contact to substrate. Lys-201, Asp-203, and Glu-204 together coordinate Mg(2+). Lys-201 is subject to N6-carboxylysine. At Ser-208 the chain carries Phosphoserine. Residue His-294 is the Proton acceptor of the active site. Substrate is bound by residues Arg-295 and His-327. The residue at position 330 (Thr-330) is a Phosphothreonine. Ser-379 provides a ligand contact to substrate.

The protein belongs to the RuBisCO large chain family. Type I subfamily. As to quaternary structure, heterohexadecamer of 8 large chains and 8 small chains; disulfide-linked. The disulfide link is formed within the large subunit homodimers. Requires Mg(2+) as cofactor. In terms of processing, the disulfide bond which can form in the large chain dimeric partners within the hexadecamer appears to be associated with oxidative stress and protein turnover.

It localises to the plastid. The protein resides in the chloroplast. It carries out the reaction 2 (2R)-3-phosphoglycerate + 2 H(+) = D-ribulose 1,5-bisphosphate + CO2 + H2O. The catalysed reaction is D-ribulose 1,5-bisphosphate + O2 = 2-phosphoglycolate + (2R)-3-phosphoglycerate + 2 H(+). Functionally, ruBisCO catalyzes two reactions: the carboxylation of D-ribulose 1,5-bisphosphate, the primary event in carbon dioxide fixation, as well as the oxidative fragmentation of the pentose substrate in the photorespiration process. Both reactions occur simultaneously and in competition at the same active site. The chain is Ribulose bisphosphate carboxylase large chain from Olimarabidopsis pumila (Dwarf rocket).